A 32-amino-acid chain; its full sequence is 24 kDa flagellin (32 aa).

The protein belongs to the archaeal flagellin family. Post-translationally, glycosylated.

It localises to the archaeal flagellum. Functionally, flagellin is the subunit protein which polymerizes to form the filaments of archaeal flagella. The polypeptide is 24 kDa flagellin (Methanospirillum hungatei).